Here is a 249-residue protein sequence, read N- to C-terminus: Myelin protein P0 (249 aa).

The N-terminal stretch at 1 to 29 (MALGAIGDGRLLLLLVGLLSASGPSPTLA) is a signal peptide. Residues 30–143 (IHVYTPREVY…DIVGKSSQVT (114 aa)) form the Ig-like V-type domain. Residues 30–153 (IHVYTPREVY…LYVLEKVPTR (124 aa)) lie on the Extracellular side of the membrane. The cysteines at positions 50 and 127 are disulfide-linked. An N-linked (GlcNAc...) asparagine glycan is attached at Asn122. A helical membrane pass occupies residues 154-179 (YGVVLGSIIGGVLLLVALLVAVVYLV). Residues 180 to 249 (RFCWLRRQAV…APGEARKDKK (70 aa)) lie on the Cytoplasmic side of the membrane. The tract at residues 227–249 (RSAKAAAEKKSKGAPGEARKDKK) is disordered.

Belongs to the myelin P0 protein family. Found only in peripheral nervous system Schwann cells.

It is found in the cell membrane. In terms of biological role, is an adhesion molecule necessary for normal myelination in the peripheral nervous system. It mediates adhesion between adjacent myelin wraps and ultimately drives myelin compaction. This chain is Myelin protein P0 (MPZ), found in Gallus gallus (Chicken).